A 338-amino-acid polypeptide reads, in one-letter code: L-serine dehydratase (338 aa).

Lys-39 bears the N6-(pyridoxal phosphate)lysine mark.

This sequence belongs to the serine/threonine dehydratase family. Pyridoxal 5'-phosphate is required as a cofactor.

The protein resides in the cytoplasm. It catalyses the reaction L-serine = pyruvate + NH4(+). It participates in carbohydrate biosynthesis; gluconeogenesis. This Saccharomyces cerevisiae (strain YJM789) (Baker's yeast) protein is L-serine dehydratase (SDL1).